Here is a 197-residue protein sequence, read N- to C-terminus: Beta-crystallin A2 (197 aa).

An N-terminal arm region spans residues 1–11; that stretch reads MSSASAPGPAP. 2 Beta/gamma crystallin 'Greek key' domains span residues 12-52 and 53-99; these read ACLT…KVEN and GAWV…RPVL. The interval 100-105 is connecting peptide; the sequence is CANHSD. 2 consecutive Beta/gamma crystallin 'Greek key' domains span residues 106–147 and 148–196; these read SRVT…KVSS and GAWV…RRVQ.

This sequence belongs to the beta/gamma-crystallin family. In terms of assembly, homo/heterodimer, or complexes of higher-order. The structure of beta-crystallin oligomers seems to be stabilized through interactions between the N-terminal arms.

Its function is as follows. Crystallins are the dominant structural components of the vertebrate eye lens. The chain is Beta-crystallin A2 (CRYBA2) from Oryctolagus cuniculus (Rabbit).